A 282-amino-acid polypeptide reads, in one-letter code: Probable porphobilinogen deaminase (282 aa).

C233 is modified (S-(dipyrrolylmethanemethyl)cysteine).

This sequence belongs to the HMBS family. Dipyrromethane is required as a cofactor.

It catalyses the reaction 4 porphobilinogen + H2O = hydroxymethylbilane + 4 NH4(+). It participates in porphyrin-containing compound metabolism; protoporphyrin-IX biosynthesis; coproporphyrinogen-III from 5-aminolevulinate: step 2/4. Tetrapolymerization of the monopyrrole PBG into the hydroxymethylbilane pre-uroporphyrinogen in several discrete steps. This Picrophilus torridus (strain ATCC 700027 / DSM 9790 / JCM 10055 / NBRC 100828 / KAW 2/3) protein is Probable porphobilinogen deaminase.